Reading from the N-terminus, the 398-residue chain is Glucose-1-phosphate adenylyltransferase (398 aa).

Alpha-D-glucose 1-phosphate is bound by residues Y100, G165, E180–K181, and S191.

It belongs to the bacterial/plant glucose-1-phosphate adenylyltransferase family. As to quaternary structure, homotetramer.

The enzyme catalyses alpha-D-glucose 1-phosphate + ATP + H(+) = ADP-alpha-D-glucose + diphosphate. Its pathway is glycan biosynthesis; glycogen biosynthesis. Its function is as follows. Involved in the biosynthesis of ADP-glucose, a building block required for the elongation reactions to produce glycogen. Catalyzes the reaction between ATP and alpha-D-glucose 1-phosphate (G1P) to produce pyrophosphate and ADP-Glc. The sequence is that of Glucose-1-phosphate adenylyltransferase from Desulfitobacterium hafniense (strain Y51).